Here is a 72-residue protein sequence, read N- to C-terminus: Translation initiation factor IF-1 (72 aa).

The 72-residue stretch at 1 to 72 (MAKDDVIEVE…TRGRITYRFK (72 aa)) folds into the S1-like domain.

The protein belongs to the IF-1 family. In terms of assembly, component of the 30S ribosomal translation pre-initiation complex which assembles on the 30S ribosome in the order IF-2 and IF-3, IF-1 and N-formylmethionyl-tRNA(fMet); mRNA recruitment can occur at any time during PIC assembly.

Its subcellular location is the cytoplasm. Functionally, one of the essential components for the initiation of protein synthesis. Stabilizes the binding of IF-2 and IF-3 on the 30S subunit to which N-formylmethionyl-tRNA(fMet) subsequently binds. Helps modulate mRNA selection, yielding the 30S pre-initiation complex (PIC). Upon addition of the 50S ribosomal subunit IF-1, IF-2 and IF-3 are released leaving the mature 70S translation initiation complex. This is Translation initiation factor IF-1 from Streptococcus gordonii (strain Challis / ATCC 35105 / BCRC 15272 / CH1 / DL1 / V288).